The primary structure comprises 306 residues: Protein SEC13 homolog (306 aa).

WD repeat units follow at residues 11–50, 56–97, 102–143, 150–195, 202–245, and 252–291; these read QHRDAIHDAQLNIYGNRLATCGSDRLVKIFEVRPNGQSYP, GHNG…WQKT, THEA…QQWQ, CHDQ…NEWT, CHKD…TAEW, and QAPCALYHASFSPCGSFLSVSGDDNMITLWRENLQGQWIK.

Belongs to the WD repeat SEC13 family. As to quaternary structure, probably part of the GATOR complex.

It localises to the cytoplasmic vesicle. It is found in the COPII-coated vesicle membrane. Its subcellular location is the endoplasmic reticulum membrane. The protein localises to the nucleus. The protein resides in the nuclear pore complex. It localises to the lysosome membrane. Functionally, functions as a component of the nuclear pore complex (NPC) and the COPII coat. As a component of the GATOR complex may function in the amino acid-sensing branch of the TORC1 signaling pathway. The sequence is that of Protein SEC13 homolog from Caenorhabditis briggsae.